Consider the following 930-residue polypeptide: Isoleucine--tRNA ligase (930 aa).

The 'HIGH' region signature appears at 57-67 (PYANGNIHVGH). An L-isoleucyl-5'-AMP-binding site is contributed by Glu554. A 'KMSKS' region motif is present at residues 595–599 (KMSKS). Residue Lys598 participates in ATP binding. 4 residues coordinate Zn(2+): Cys888, Cys891, Cys908, and Cys911.

The protein belongs to the class-I aminoacyl-tRNA synthetase family. IleS type 1 subfamily. As to quaternary structure, monomer. Requires Zn(2+) as cofactor.

Its subcellular location is the cytoplasm. It carries out the reaction tRNA(Ile) + L-isoleucine + ATP = L-isoleucyl-tRNA(Ile) + AMP + diphosphate. In terms of biological role, catalyzes the attachment of isoleucine to tRNA(Ile). As IleRS can inadvertently accommodate and process structurally similar amino acids such as valine, to avoid such errors it has two additional distinct tRNA(Ile)-dependent editing activities. One activity is designated as 'pretransfer' editing and involves the hydrolysis of activated Val-AMP. The other activity is designated 'posttransfer' editing and involves deacylation of mischarged Val-tRNA(Ile). In Streptococcus pneumoniae (strain P1031), this protein is Isoleucine--tRNA ligase.